Here is a 715-residue protein sequence, read N- to C-terminus: Putative macrophage stimulating 1-like protein (715 aa).

An N-terminal signal peptide occupies residues 1 to 20 (MAPAPVTLLAPGAASSMSCS). The PAN domain occupies 21–110 (QPGQRSPSND…GRCDLFQEKG (90 aa)). 4 consecutive Kringle domains span residues 63-156 (GRCG…IKSC), 160-238 (ACVW…LPRC), 252-345 (SCFR…IRRC), and 353-464 (DCYH…LRRC). 12 disulfide bridges follow: Cys127/Cys151, Cys161/Cys238, Cys182/Cys221, Cys210/Cys233, Cys253/Cys345, Cys316/Cys339, Cys354/Cys464, Cys375/Cys447, Cys511/Cys527, Cys606/Cys671, Cys636/Cys650, and Cys661/Cys689. Positions 488-713 (VAGGHPGNSP…FVDWIHKVMR (226 aa)) constitute a Peptidase S1 domain.

Belongs to the peptidase S1 family. Plasminogen subfamily.

It localises to the secreted. In Homo sapiens (Human), this protein is Putative macrophage stimulating 1-like protein (MST1L).